A 140-amino-acid chain; its full sequence is Large ribosomal subunit protein bL17 (140 aa).

Residues 119–140 (DTTAKGQDSGPVQVEEQENEEA) form a disordered region.

It belongs to the bacterial ribosomal protein bL17 family. As to quaternary structure, part of the 50S ribosomal subunit. Contacts protein L32.

This chain is Large ribosomal subunit protein bL17, found in Zymomonas mobilis subsp. mobilis (strain ATCC 31821 / ZM4 / CP4).